Reading from the N-terminus, the 179-residue chain is Large ribosomal subunit protein uL5 (179 aa).

The protein belongs to the universal ribosomal protein uL5 family. As to quaternary structure, part of the 50S ribosomal subunit; part of the 5S rRNA/L5/L18/L25 subcomplex. Contacts the 5S rRNA and the P site tRNA. Forms a bridge to the 30S subunit in the 70S ribosome.

Its function is as follows. This is one of the proteins that bind and probably mediate the attachment of the 5S RNA into the large ribosomal subunit, where it forms part of the central protuberance. In the 70S ribosome it contacts protein S13 of the 30S subunit (bridge B1b), connecting the 2 subunits; this bridge is implicated in subunit movement. Contacts the P site tRNA; the 5S rRNA and some of its associated proteins might help stabilize positioning of ribosome-bound tRNAs. The polypeptide is Large ribosomal subunit protein uL5 (Nitratidesulfovibrio vulgaris (strain ATCC 29579 / DSM 644 / CCUG 34227 / NCIMB 8303 / VKM B-1760 / Hildenborough) (Desulfovibrio vulgaris)).